The chain runs to 34 residues: Turripeptide Pal9a (34 aa).

3 cysteine pairs are disulfide-bonded: Cys3-Cys17, Cys8-Cys19, and Cys13-Cys30. Gln34 carries the post-translational modification Glutamine amide.

Expressed by the venom duct.

Its subcellular location is the secreted. The polypeptide is Turripeptide Pal9a (Polystira albida (White giant-turris)).